We begin with the raw amino-acid sequence, 430 residues long: 3-phosphoshikimate 1-carboxyvinyltransferase (430 aa).

Lys-23, Ser-24, and Arg-28 together coordinate 3-phosphoshikimate. Residue Lys-23 coordinates phosphoenolpyruvate. Phosphoenolpyruvate is bound by residues Gly-95 and Arg-123. Residues Ser-169, Gln-171, Asp-315, and Lys-342 each contribute to the 3-phosphoshikimate site. Gln-171 lines the phosphoenolpyruvate pocket. Asp-315 (proton acceptor) is an active-site residue. Arg-346 and Arg-388 together coordinate phosphoenolpyruvate.

The protein belongs to the EPSP synthase family. As to quaternary structure, monomer.

Its subcellular location is the cytoplasm. It carries out the reaction 3-phosphoshikimate + phosphoenolpyruvate = 5-O-(1-carboxyvinyl)-3-phosphoshikimate + phosphate. The protein operates within metabolic intermediate biosynthesis; chorismate biosynthesis; chorismate from D-erythrose 4-phosphate and phosphoenolpyruvate: step 6/7. Functionally, catalyzes the transfer of the enolpyruvyl moiety of phosphoenolpyruvate (PEP) to the 5-hydroxyl of shikimate-3-phosphate (S3P) to produce enolpyruvyl shikimate-3-phosphate and inorganic phosphate. The polypeptide is 3-phosphoshikimate 1-carboxyvinyltransferase (Streptococcus pyogenes serotype M3 (strain ATCC BAA-595 / MGAS315)).